Here is a 248-residue protein sequence, read N- to C-terminus: 2-acetamido-2-deoxy-D-galactose-binding seed lectin 2 (248 aa).

The N-linked (GlcNAc...) asparagine; partial glycan is linked to asparagine 119. Positions 128 and 130 each coordinate Mn(2+). The Ca(2+) site is built by aspartate 130, tyrosine 132, asparagine 134, and aspartate 138. The Mn(2+) site is built by aspartate 138 and histidine 144.

The protein belongs to the leguminous lectin family.

The protein is 2-acetamido-2-deoxy-D-galactose-binding seed lectin 2 of Cytisus scoparius (Scotch broom).